A 166-amino-acid polypeptide reads, in one-letter code: 2-C-methyl-D-erythritol 2,4-cyclodiphosphate synthase (166 aa).

Residues Asp15 and His17 each coordinate a divalent metal cation. 4-CDP-2-C-methyl-D-erythritol 2-phosphate contacts are provided by residues 15–17 (DVH) and 43–44 (HS). His51 contributes to the a divalent metal cation binding site. 4-CDP-2-C-methyl-D-erythritol 2-phosphate is bound by residues 65–67 (DIG), 141–144 (TTNE), and Arg151.

This sequence belongs to the IspF family. In terms of assembly, homotrimer. The cofactor is a divalent metal cation.

It catalyses the reaction 4-CDP-2-C-methyl-D-erythritol 2-phosphate = 2-C-methyl-D-erythritol 2,4-cyclic diphosphate + CMP. It participates in isoprenoid biosynthesis; isopentenyl diphosphate biosynthesis via DXP pathway; isopentenyl diphosphate from 1-deoxy-D-xylulose 5-phosphate: step 4/6. Functionally, involved in the biosynthesis of isopentenyl diphosphate (IPP) and dimethylallyl diphosphate (DMAPP), two major building blocks of isoprenoid compounds. Catalyzes the conversion of 4-diphosphocytidyl-2-C-methyl-D-erythritol 2-phosphate (CDP-ME2P) to 2-C-methyl-D-erythritol 2,4-cyclodiphosphate (ME-CPP) with a corresponding release of cytidine 5-monophosphate (CMP). This chain is 2-C-methyl-D-erythritol 2,4-cyclodiphosphate synthase, found in Synechococcus sp. (strain CC9311).